We begin with the raw amino-acid sequence, 121 residues long: Small ribosomal subunit protein uS13 (121 aa).

The tract at residues 91-121 (HKRGLPVRGQRTRTNARTRKGPRRAAASLKK) is disordered.

The protein belongs to the universal ribosomal protein uS13 family. Part of the 30S ribosomal subunit. Forms a loose heterodimer with protein S19. Forms two bridges to the 50S subunit in the 70S ribosome.

Located at the top of the head of the 30S subunit, it contacts several helices of the 16S rRNA. In the 70S ribosome it contacts the 23S rRNA (bridge B1a) and protein L5 of the 50S subunit (bridge B1b), connecting the 2 subunits; these bridges are implicated in subunit movement. Contacts the tRNAs in the A and P-sites. The chain is Small ribosomal subunit protein uS13 from Bordetella avium (strain 197N).